Consider the following 171-residue polypeptide: uncharacterized protein (171 aa).

This is an uncharacterized protein from Mycoplasma genitalium (strain ATCC 33530 / DSM 19775 / NCTC 10195 / G37) (Mycoplasmoides genitalium).